Consider the following 248-residue polypeptide: Adenosylcobinamide-GDP ribazoletransferase (248 aa).

Transmembrane regions (helical) follow at residues 3 to 23 (ELKALILSIQFMTGIPIPINI), 35 to 55 (SYFPVVGLLIGGILYIAYLLL), 63 to 83 (IVMTFLVAFSYILTRGMHIDG), 109 to 129 (LGTNGVLALVFMVILKILFLS), 135 to 155 (LLFSALLVSPVIARLSVVFSI), 180 to 199 (FVIALLISTIAGYFVMPLKD), 200 to 219 (LALLYVISLSFTCLISKYIS), and 228 to 248 (DTLGAVNEFVELIAFIYFSIL).

The protein belongs to the CobS family. The cofactor is Mg(2+).

It localises to the cell membrane. The enzyme catalyses alpha-ribazole + adenosylcob(III)inamide-GDP = adenosylcob(III)alamin + GMP + H(+). The catalysed reaction is alpha-ribazole 5'-phosphate + adenosylcob(III)inamide-GDP = adenosylcob(III)alamin 5'-phosphate + GMP + H(+). The protein operates within cofactor biosynthesis; adenosylcobalamin biosynthesis; adenosylcobalamin from cob(II)yrinate a,c-diamide: step 7/7. Joins adenosylcobinamide-GDP and alpha-ribazole to generate adenosylcobalamin (Ado-cobalamin). Also synthesizes adenosylcobalamin 5'-phosphate from adenosylcobinamide-GDP and alpha-ribazole 5'-phosphate. The chain is Adenosylcobinamide-GDP ribazoletransferase from Caldanaerobacter subterraneus subsp. tengcongensis (strain DSM 15242 / JCM 11007 / NBRC 100824 / MB4) (Thermoanaerobacter tengcongensis).